Reading from the N-terminus, the 319-residue chain is Urease accessory protein UreD (319 aa).

The disordered stretch occupies residues 254–273 (PDPVGSPAARRESVPAKRAE). Basic and acidic residues predominate over residues 262–273 (ARRESVPAKRAE).

It belongs to the UreD family. As to quaternary structure, ureD, UreF and UreG form a complex that acts as a GTP-hydrolysis-dependent molecular chaperone, activating the urease apoprotein by helping to assemble the nickel containing metallocenter of UreC. The UreE protein probably delivers the nickel.

The protein localises to the cytoplasm. Required for maturation of urease via the functional incorporation of the urease nickel metallocenter. This Frankia casuarinae (strain DSM 45818 / CECT 9043 / HFP020203 / CcI3) protein is Urease accessory protein UreD.